Here is a 500-residue protein sequence, read N- to C-terminus: Lysine--tRNA ligase (500 aa).

The Mg(2+) site is built by Glu410 and Glu417.

Belongs to the class-II aminoacyl-tRNA synthetase family. As to quaternary structure, homodimer. The cofactor is Mg(2+).

It is found in the cytoplasm. It catalyses the reaction tRNA(Lys) + L-lysine + ATP = L-lysyl-tRNA(Lys) + AMP + diphosphate. The protein is Lysine--tRNA ligase of Mycoplasma mycoides subsp. mycoides SC (strain CCUG 32753 / NCTC 10114 / PG1).